An 83-amino-acid polypeptide reads, in one-letter code: Small ribosomal subunit protein bS16 (83 aa).

The protein belongs to the bacterial ribosomal protein bS16 family.

The sequence is that of Small ribosomal subunit protein bS16 from Pseudomonas putida (strain ATCC 700007 / DSM 6899 / JCM 31910 / BCRC 17059 / LMG 24140 / F1).